Here is a 261-residue protein sequence, read N- to C-terminus: MTEPDVAGAPASKPEPASTGAASAAQLSGYSRVLLKLGGEMFGGGQVGLDPDVVAQVARQIADVVRGGVQIAVVIGGGNFFRGAQLQQLGMERTRSDYMGMLGTVMNSLALQDFLEKEGIVTRVQTAITMGQVAEPYLPLRAVRHLEKGRVVIFGAGMGLPYFSTDTTAAQRALEIGADVVLMAKAVDGVFAEDPRVNPEAELLTAVSHREVLDRGLRVADATAFSLCMDNGMPILVFNLLTDGNIARAVRGEKIGTLVTT.

Residues 1 to 23 (MTEPDVAGAPASKPEPASTGAAS) form a disordered region. 36 to 39 (KLGG) is an ATP binding site. UMP is bound at residue G77. 2 residues coordinate ATP: G78 and R82. Residues D97 and 158–165 (MGLPYFST) contribute to the UMP site. Residues F191 and D194 each coordinate ATP.

Belongs to the UMP kinase family. Homohexamer.

Its subcellular location is the cytoplasm. It catalyses the reaction UMP + ATP = UDP + ADP. It functions in the pathway pyrimidine metabolism; CTP biosynthesis via de novo pathway; UDP from UMP (UMPK route): step 1/1. Inhibited by UTP. Catalyzes the reversible phosphorylation of UMP to UDP. This Mycobacterium tuberculosis (strain ATCC 25177 / H37Ra) protein is Uridylate kinase.